We begin with the raw amino-acid sequence, 59 residues long: MSRRRGVMSNQFKEELAKELGFYDVVQKEGWGGIRAKDAGNMVKRAIEIAEQQLMKRNQ.

Belongs to the alpha/beta-type SASP family.

May play some important role in either sporulation or the dormant spore. This is Protein SspF (sspF) from Bacillus cereus (strain ATCC 14579 / DSM 31 / CCUG 7414 / JCM 2152 / NBRC 15305 / NCIMB 9373 / NCTC 2599 / NRRL B-3711).